A 216-amino-acid chain; its full sequence is Imidazole glycerol phosphate synthase subunit HisH (216 aa).

Positions arginine 5 to alanine 213 constitute a Glutamine amidotransferase type-1 domain. Cysteine 83 serves as the catalytic Nucleophile. Residues histidine 188 and glutamate 190 contribute to the active site.

In terms of assembly, heterodimer of HisH and HisF.

Its subcellular location is the cytoplasm. It catalyses the reaction 5-[(5-phospho-1-deoxy-D-ribulos-1-ylimino)methylamino]-1-(5-phospho-beta-D-ribosyl)imidazole-4-carboxamide + L-glutamine = D-erythro-1-(imidazol-4-yl)glycerol 3-phosphate + 5-amino-1-(5-phospho-beta-D-ribosyl)imidazole-4-carboxamide + L-glutamate + H(+). The catalysed reaction is L-glutamine + H2O = L-glutamate + NH4(+). Its pathway is amino-acid biosynthesis; L-histidine biosynthesis; L-histidine from 5-phospho-alpha-D-ribose 1-diphosphate: step 5/9. In terms of biological role, IGPS catalyzes the conversion of PRFAR and glutamine to IGP, AICAR and glutamate. The HisH subunit catalyzes the hydrolysis of glutamine to glutamate and ammonia as part of the synthesis of IGP and AICAR. The resulting ammonia molecule is channeled to the active site of HisF. This Synechococcus sp. (strain JA-3-3Ab) (Cyanobacteria bacterium Yellowstone A-Prime) protein is Imidazole glycerol phosphate synthase subunit HisH.